We begin with the raw amino-acid sequence, 426 residues long: UPF0597 protein CLD_2825 (426 aa).

This sequence belongs to the UPF0597 family.

The polypeptide is UPF0597 protein CLD_2825 (Clostridium botulinum (strain Okra / Type B1)).